Consider the following 220-residue polypeptide: Transcriptional regulatory protein SpaR (220 aa).

One can recognise a Response regulatory domain in the interval 3–115 (KILAVDDEKD…ELSARVNAHL (113 aa)). Residue D51 is modified to 4-aspartylphosphate. The segment at residues 124 to 220 (QSKRVISGFL…TVWGVGYKWE (97 aa)) is a DNA-binding region (ompR/PhoB-type).

In terms of processing, phosphorylated by SpaK.

The protein localises to the cytoplasm. Functionally, member of the two-component regulatory system SpaK/SpaR involved in the regulation of the biosynthesis of lantibiotic subtilin. SpaR may function as a regulatory protein. This Bacillus subtilis protein is Transcriptional regulatory protein SpaR (spaR).